Consider the following 367-residue polypeptide: MMETQLYIGIMSGTSMDGADAVLVRMDGGKWLGAEGHAFTPYPDRLRRKLLDLQDTGTDELHRSRMLSQELSRLYAQTAAELLCSQNLAPCDITALGCHGQTVRHAPEHGYSIQLADLPLLAELTRIFTVGDFRSRDLAAGGQGAPLVPAFHEALFRDDRETRVVLNIGGIANISVLPPGAPAFGFDTGPGNMLMDAWTQAHWQLPYDKNGAKAAQGNILPQLLGRLLAHPYFSQPHPKSTGRELFALNWLETYLDGGENRYDVLRTLSRFTAQTVCDAVSHAAADARQMYICGGGIRNPVLMADLAECFGTRVSLHSTAELNLDPQWVEAAAFAWLAACWINRIPGSPHKATGASKPCILGAGYYY.

13–20 (GTSMDGAD) contacts ATP.

It belongs to the anhydro-N-acetylmuramic acid kinase family.

The catalysed reaction is 1,6-anhydro-N-acetyl-beta-muramate + ATP + H2O = N-acetyl-D-muramate 6-phosphate + ADP + H(+). It functions in the pathway amino-sugar metabolism; 1,6-anhydro-N-acetylmuramate degradation. It participates in cell wall biogenesis; peptidoglycan recycling. Catalyzes the specific phosphorylation of 1,6-anhydro-N-acetylmuramic acid (anhMurNAc) with the simultaneous cleavage of the 1,6-anhydro ring, generating MurNAc-6-P. Is required for the utilization of anhMurNAc either imported from the medium or derived from its own cell wall murein, and thus plays a role in cell wall recycling. This is Anhydro-N-acetylmuramic acid kinase from Neisseria gonorrhoeae (strain ATCC 700825 / FA 1090).